Reading from the N-terminus, the 438-residue chain is uncharacterized protein (438 aa).

This is an uncharacterized protein from Encephalitozoon cuniculi (strain GB-M1) (Microsporidian parasite).